The sequence spans 925 residues: Bifunctional uridylyltransferase/uridylyl-removing enzyme (925 aa).

The uridylyltransferase stretch occupies residues 1-382 (MVLPTTKDAT…PPGAEVRRVP (382 aa)). The segment at 383–738 (DSDDFIIDNN…VGFDEARGVT (356 aa)) is uridylyl-removing. The HD domain occupies 498–621 (VDEHLIRCIG…VQSVERMKLL (124 aa)). ACT domains are found at residues 739-820 (ELTI…DVMP) and 849-925 (MIEV…NTAE).

It belongs to the GlnD family. The cofactor is Mg(2+).

The enzyme catalyses [protein-PII]-L-tyrosine + UTP = [protein-PII]-uridylyl-L-tyrosine + diphosphate. It carries out the reaction [protein-PII]-uridylyl-L-tyrosine + H2O = [protein-PII]-L-tyrosine + UMP + H(+). With respect to regulation, uridylyltransferase (UTase) activity is inhibited by glutamine, while glutamine activates uridylyl-removing (UR) activity. Its function is as follows. Modifies, by uridylylation and deuridylylation, the PII regulatory proteins (GlnB and homologs), in response to the nitrogen status of the cell that GlnD senses through the glutamine level. Under low glutamine levels, catalyzes the conversion of the PII proteins and UTP to PII-UMP and PPi, while under higher glutamine levels, GlnD hydrolyzes PII-UMP to PII and UMP (deuridylylation). Thus, controls uridylylation state and activity of the PII proteins, and plays an important role in the regulation of nitrogen assimilation and metabolism. This Nitrobacter winogradskyi (strain ATCC 25391 / DSM 10237 / CIP 104748 / NCIMB 11846 / Nb-255) protein is Bifunctional uridylyltransferase/uridylyl-removing enzyme.